Reading from the N-terminus, the 179-residue chain is Large ribosomal subunit protein uL5 (179 aa).

The protein belongs to the universal ribosomal protein uL5 family. In terms of assembly, part of the 50S ribosomal subunit; part of the 5S rRNA/L5/L18/L25 subcomplex. Contacts the 5S rRNA and the P site tRNA. Forms a bridge to the 30S subunit in the 70S ribosome.

Functionally, this is one of the proteins that bind and probably mediate the attachment of the 5S RNA into the large ribosomal subunit, where it forms part of the central protuberance. In the 70S ribosome it contacts protein S13 of the 30S subunit (bridge B1b), connecting the 2 subunits; this bridge is implicated in subunit movement. Contacts the P site tRNA; the 5S rRNA and some of its associated proteins might help stabilize positioning of ribosome-bound tRNAs. The sequence is that of Large ribosomal subunit protein uL5 from Dehalococcoides mccartyi (strain ATCC BAA-2266 / KCTC 15142 / 195) (Dehalococcoides ethenogenes (strain 195)).